A 132-amino-acid chain; its full sequence is Small ribosomal subunit protein uS12 (132 aa).

Aspartate 89 is modified (3-methylthioaspartic acid). Residues 101–132 form a disordered region; the sequence is TLDASGAAGPSSTNKATRNRKRSKYGVKRPKA. The segment covering 117 to 132 has biased composition (basic residues); that stretch reads TRNRKRSKYGVKRPKA.

It belongs to the universal ribosomal protein uS12 family. Part of the 30S ribosomal subunit. Contacts proteins S8 and S17. May interact with IF1 in the 30S initiation complex.

In terms of biological role, with S4 and S5 plays an important role in translational accuracy. Functionally, interacts with and stabilizes bases of the 16S rRNA that are involved in tRNA selection in the A site and with the mRNA backbone. Located at the interface of the 30S and 50S subunits, it traverses the body of the 30S subunit contacting proteins on the other side and probably holding the rRNA structure together. The combined cluster of proteins S8, S12 and S17 appears to hold together the shoulder and platform of the 30S subunit. The polypeptide is Small ribosomal subunit protein uS12 (Sorangium cellulosum (strain So ce56) (Polyangium cellulosum (strain So ce56))).